The sequence spans 208 residues: Interleukin-6 (208 aa).

The N-terminal stretch at 1–29 is a signal peptide; it reads MNSRFTSAFTPFAVSLGLLLVMTSAFPTP. N-linked (GlcNAc...) asparagine glycosylation is present at Asn38. Cys72 and Cys78 are disulfide-bonded. Ser81 is subject to Phosphoserine. Cys101 and Cys111 form a disulfide bridge.

The protein belongs to the IL-6 superfamily. As to quaternary structure, component of a hexamer of two molecules each of IL6, IL6R and IL6ST; first binds to IL6R to associate with the signaling subunit IL6ST. Interacts with IL6R (via the N-terminal ectodomain); this interaction may be affected by IL6R-binding with SORL1, hence decreasing IL6 cis signaling. Interacts with SORL1 (via the N-terminal ectodomain); this interaction leads to IL6 internalization and lysosomal degradation. May form a trimeric complex with the soluble SORL1 ectodomain and soluble IL6R receptor; this interaction might stabilize circulating IL6, hence promoting IL6 trans signaling.

Its subcellular location is the secreted. Functionally, cytokine with a wide variety of biological functions in immunity, tissue regeneration, and metabolism. Binds to IL6R, then the complex associates to the signaling subunit IL6ST/gp130 to trigger the intracellular IL6-signaling pathway. The interaction with the membrane-bound IL6R and IL6ST stimulates 'classic signaling', whereas the binding of IL6 and soluble IL6R to IL6ST stimulates 'trans-signaling'. Alternatively, 'cluster signaling' occurs when membrane-bound IL6:IL6R complexes on transmitter cells activate IL6ST receptors on neighboring receiver cells. In terms of biological role, IL6 is a potent inducer of the acute phase response. Rapid production of IL6 contributes to host defense during infection and tissue injury, but excessive IL6 synthesis is involved in disease pathology. In the innate immune response, is synthesized by myeloid cells, such as macrophages and dendritic cells, upon recognition of pathogens through toll-like receptors (TLRs) at the site of infection or tissue injury. In the adaptive immune response, is required for the differentiation of B cells into immunoglobulin-secreting cells. Plays a major role in the differentiation of CD4(+) T cell subsets. Essential factor for the development of T follicular helper (Tfh) cells that are required for the induction of germinal-center formation. Required to drive naive CD4(+) T cells to the Th17 lineage. Also required for proliferation of myeloma cells and the survival of plasmablast cells. Acts as an essential factor in bone homeostasis and on vessels directly or indirectly by induction of VEGF, resulting in increased angiogenesis activity and vascular permeability. Induces, through 'trans-signaling' and synergistically with IL1B and TNF, the production of VEGF. Involved in metabolic controls, is discharged into the bloodstream after muscle contraction increasing lipolysis and improving insulin resistance. 'Trans-signaling' in central nervous system also regulates energy and glucose homeostasis. Mediates, through GLP-1, crosstalk between insulin-sensitive tissues, intestinal L cells and pancreatic islets to adapt to changes in insulin demand. Also acts as a myokine. Plays a protective role during liver injury, being required for maintenance of tissue regeneration. Also has a pivotal role in iron metabolism by regulating HAMP/hepcidin expression upon inflammation or bacterial infection. Through activation of IL6ST-YAP-NOTCH pathway, induces inflammation-induced epithelial regeneration. The polypeptide is Interleukin-6 (IL6) (Bubalus bubalis (Domestic water buffalo)).